The following is a 715-amino-acid chain: Forkhead box protein P2 (715 aa).

Residues 1-28 (MMQESATETISNSSMNQNGMSTLSSQLD) show a composition bias toward polar residues. 2 disordered regions span residues 1 to 46 (MMQE…EVST) and 281 to 339 (DNGI…TGAS). The span at 292–305 (TTNNSSSTTSSNTS) shows a compositional bias: low complexity. Residues 326 to 337 (ARRDSSSHEETG) are compositionally biased toward basic and acidic residues. Residues 346–371 (GVCKWPGCESICEDFGQFLKHLNNEH) form a C2H2-type zinc finger. The segment at 388–409 (VQQLEIQLSKERERLQAMMTHL) is leucine-zipper. The segment at 422–426 (PLNLV) is CTBP1-binding. The span at 438-459 (TSPQSLPQTPTTPTAPVTPITQ) shows a compositional bias: low complexity. The tract at residues 438-465 (TSPQSLPQTPTTPTAPVTPITQGPSVIT) is disordered. Positions 504–594 (RPPFTYATLI…SQKITGSPTL (91 aa)) form a DNA-binding region, fork-head. 2 disordered regions span residues 649–668 (LDHI…QPHI) and 678–715 (VIAE…EDLE). A compositionally biased stretch (acidic residues) spans 699 to 715 (LEDDREIEEEPLSEDLE).

In terms of assembly, forms homodimers and heterodimers with FOXP1 and FOXP4. Dimerization is required for DNA-binding. Interacts with CTBP1. Interacts with FOXP1. Isoform 1 and isoform 3 interact with TBR1. Interacts with ZMYM2. Isoform 1 and isoform 6 are expressed in adult and fetal brain, caudate nucleus and lung.

It localises to the nucleus. Transcriptional repressor that may play a role in the specification and differentiation of lung epithelium. May also play a role in developing neural, gastrointestinal and cardiovascular tissues. Can act with CTBP1 to synergistically repress transcription but CTPBP1 is not essential. Plays a role in synapse formation by regulating SRPX2 levels. Involved in neural mechanisms mediating the development of speech and language. This Homo sapiens (Human) protein is Forkhead box protein P2 (FOXP2).